The following is a 394-amino-acid chain: Probable glycosyltransferase FCK3 (394 aa).

This sequence belongs to the afumC glycosyltransferase family.

The protein operates within secondary metabolite biosynthesis. Probable glycosyl transferase; part of the gene cluster that mediates the biosynthesis of cytokinins such as fusatin, fusatinic acids or 8-oxofusatin, known for their growth promoting and anti-senescence activities toward host plants. FCK1 is a bifunctional enzyme that performs the first steps in the biosynthesis of Fusarium cytokinins. It first condenses adenosine monophosphate (AMP) with dimethylallyl diphosphate (DMAPP) to yield isoprenyl adenosine monophosphate. It then catalyzes the removal of the phosphoribose to produce isopentenylaldehyde. The cytochrome P450 monooxygenase then converts isopentenylaldehyde to trans-zeatin. A condensation step converts trans-zeatin to fusatin which is further modified to produce fusatinic acid. The mechanism for oxidation of fusatin to fusatinic acid remains unknown. 8-oxofusatin could be produced through several pathways, via direct oxygenation of fusatin, or via the 8-oxo-pentenyladenine intermediate which itself must arise from either the prenylation of 8-oxo-AMP by FCK1 and/or oxygenation of isopentenylaldehyde. Both the FCK3 and FCK4 enzymes act downstream of the identified cytokinins to produce yet unidentified compounds. The chain is Probable glycosyltransferase FCK3 from Fusarium pseudograminearum (strain CS3096) (Wheat and barley crown-rot fungus).